The sequence spans 614 residues: V-type proton ATPase catalytic subunit A (614 aa).

247-254 (GAFGCGKT) serves as a coordination point for ATP.

The protein belongs to the ATPase alpha/beta chains family. V-ATPase is a heteromultimeric enzyme made up of two complexes: the ATP-hydrolytic V1 complex and the proton translocation V0 complex. The V1 complex consists of three catalytic AB heterodimers that form a heterohexamer, three peripheral stalks each consisting of EG heterodimers, one central rotor including subunits D and F, and the regulatory subunits C and H. The proton translocation complex V0 consists of the proton transport subunit a, a ring of proteolipid subunits c9c'', rotary subunit d, subunits e and f, and the accessory subunits VhaAC45 and ATP6AP2.

The enzyme catalyses ATP + H2O + 4 H(+)(in) = ADP + phosphate + 5 H(+)(out). With respect to regulation, ATP hydrolysis occurs at the interface between the nucleotide-binding domains of subunits A and B. ATP hydrolysis triggers a conformational change in the subunits D and F, which induces a shift of subunit d. The c-ring is subsequently rotated and results in a continuous proton translocation across the membrane. Catalytic subunit of the V1 complex of vacuolar(H+)-ATPase (V-ATPase), a multisubunit enzyme composed of a peripheral complex (V1) that hydrolyzes ATP and a membrane integral complex (V0) that translocates protons. V-ATPase is responsible for acidifying and maintaining the pH of intracellular compartments and in some cell types, is targeted to the plasma membrane, where it is responsible for acidifying the extracellular environment. The protein is V-type proton ATPase catalytic subunit A (VhaA) of Aedes aegypti (Yellowfever mosquito).